Consider the following 323-residue polypeptide: Mitochondrial glutamate carrier 1 (323 aa).

Solcar repeat units follow at residues 6 to 93 (ISLP…FRHQ), 101 to 214 (LTLP…LNQL), and 223 to 312 (SPFY…GIAE). 6 helical membrane-spanning segments follow: residues 12 to 32 (LINGGIAGLIGVTCVFPIDLA), 62 to 82 (YFGMYRGAAVNLTLVTPEKAI), 107 to 127 (MLAGCGAGTCQVIVTTPMEML), 189 to 209 (GLGATLLRDVPFSIVYFPLFA), 223 to 243 (SPFYVSFLAGCVAGSAAAVAV), and 292 to 312 (ALVIAPLFGIAQVVYFLGIAE).

The protein belongs to the mitochondrial carrier (TC 2.A.29) family.

It localises to the mitochondrion inner membrane. The enzyme catalyses L-glutamate(in) + H(+)(in) = L-glutamate(out) + H(+)(out). Its function is as follows. Mitochondrial glutamate/H(+) symporter. Responsible for the transport of glutamate from the cytosol into the mitochondrial matrix with the concomitant import of a proton. Plays a role in the control of glucose-stimulated insulin secretion. The sequence is that of Mitochondrial glutamate carrier 1 (Slc25a22) from Mus musculus (Mouse).